Consider the following 194-residue polypeptide: Ribonuclease HII (194 aa).

Residues isoleucine 3–leucine 193 form the RNase H type-2 domain. 3 residues coordinate a divalent metal cation: aspartate 9, glutamate 10, and aspartate 101.

It belongs to the RNase HII family. Mn(2+) serves as cofactor. The cofactor is Mg(2+).

The protein resides in the cytoplasm. It carries out the reaction Endonucleolytic cleavage to 5'-phosphomonoester.. In terms of biological role, endonuclease that specifically degrades the RNA of RNA-DNA hybrids. The chain is Ribonuclease HII (rnhB) from Neisseria meningitidis serogroup A / serotype 4A (strain DSM 15465 / Z2491).